The chain runs to 230 residues: Phosphoribosylformylglycinamidine synthase subunit PurQ (230 aa).

The Glutamine amidotransferase type-1 domain occupies 2-226; it reads RVAVIVFPGS…LKTWREQNSV (225 aa). C86 acts as the Nucleophile in catalysis. Catalysis depends on residues H195 and E197.

Part of the FGAM synthase complex composed of 1 PurL, 1 PurQ and 2 PurS subunits.

It is found in the cytoplasm. The catalysed reaction is N(2)-formyl-N(1)-(5-phospho-beta-D-ribosyl)glycinamide + L-glutamine + ATP + H2O = 2-formamido-N(1)-(5-O-phospho-beta-D-ribosyl)acetamidine + L-glutamate + ADP + phosphate + H(+). The enzyme catalyses L-glutamine + H2O = L-glutamate + NH4(+). It functions in the pathway purine metabolism; IMP biosynthesis via de novo pathway; 5-amino-1-(5-phospho-D-ribosyl)imidazole from N(2)-formyl-N(1)-(5-phospho-D-ribosyl)glycinamide: step 1/2. Functionally, part of the phosphoribosylformylglycinamidine synthase complex involved in the purines biosynthetic pathway. Catalyzes the ATP-dependent conversion of formylglycinamide ribonucleotide (FGAR) and glutamine to yield formylglycinamidine ribonucleotide (FGAM) and glutamate. The FGAM synthase complex is composed of three subunits. PurQ produces an ammonia molecule by converting glutamine to glutamate. PurL transfers the ammonia molecule to FGAR to form FGAM in an ATP-dependent manner. PurS interacts with PurQ and PurL and is thought to assist in the transfer of the ammonia molecule from PurQ to PurL. The polypeptide is Phosphoribosylformylglycinamidine synthase subunit PurQ (Brevibacillus brevis (strain 47 / JCM 6285 / NBRC 100599)).